Here is a 323-residue protein sequence, read N- to C-terminus: tRNA U34 carboxymethyltransferase (323 aa).

Carboxy-S-adenosyl-L-methionine contacts are provided by residues K91, W105, K110, G130, 181–182 (IE), M196, Y200, and R315.

The protein belongs to the class I-like SAM-binding methyltransferase superfamily. CmoB family. Homotetramer.

The enzyme catalyses carboxy-S-adenosyl-L-methionine + 5-hydroxyuridine(34) in tRNA = 5-carboxymethoxyuridine(34) in tRNA + S-adenosyl-L-homocysteine + H(+). Its function is as follows. Catalyzes carboxymethyl transfer from carboxy-S-adenosyl-L-methionine (Cx-SAM) to 5-hydroxyuridine (ho5U) to form 5-carboxymethoxyuridine (cmo5U) at position 34 in tRNAs. The sequence is that of tRNA U34 carboxymethyltransferase from Serratia proteamaculans (strain 568).